The primary structure comprises 701 residues: MKSFTVIALAAVALLATLGQAKHLDSKVADKDFLMKQKFMYQILQHIYQDDVFTTPFGGSYVEYKPWEHVADYVHPEMLEHFFELWQHQPFTDDMVWSVMYDKHEEYVVGLVRLFYFAKNWETFQHVVYWARQHVNKQLFVYAVTIASLFRDDMQGVVLPAHYEIHPWSYFDSQALEWAEHYKMHGFHHVKQMDNIYNVVIRTNYSNVHGSLNYDHDLAYYLEDVGFNAFYYYFNLDYPFWTKGGEEHVLNKDRRGELYLYVHWQLLARWYLERLSHDLGEVPAFNMYVPTESGYASNLRTYYGVPQWHRENHHSFYHEHNYEHIEHVEMYTQRVMDWIHKNEKFDVETINVLGNIIQGNADSVDKKFYGSLDKLYRFIVNEGHHYGHGDESFPGLFMHYDTSMRDPIFYEVYKTIVSHYWHLMETYPEYHKKDYAFEGVHIDAVHMPESLTTYFEHFDSDISNAVNVEPAVEGSADPLYTFGRNSHYKGSSYVIKARQQRLNHKPFEFTLDVTSDKAQDAVVKVFIGPKYDEHGHEIPLEHNYQNFFELEHFKVHLEAGVNHIKRASGDFSFWVNDRTTYLELYQKLMDATNSDYKFKLDQSEAHCGVPNRMMLPRGKKGGQVFQFFYMVYPYHQPEVAQFTGYDPVVSCGVGHGSRYVDALPFGFPFNRPVKHDYYFDVHNFKFVDVKIFHRDEHTNVV.

Residues 1-21 (MKSFTVIALAAVALLATLGQA) form the signal peptide. A glycan (N-linked (GlcNAc...) asparagine) is linked at asparagine 204.

Belongs to the hemocyanin family. In terms of assembly, homohexamer.

The protein resides in the secreted. Its subcellular location is the extracellular space. Functionally, larval storage protein (LSP) which may serve as a store of amino acids for synthesis of adult proteins. In Drosophila melanogaster (Fruit fly), this protein is Larval serum protein 2 (Lsp2).